The chain runs to 198 residues: Syndecan-4 (198 aa).

An N-terminal signal peptide occupies residues 1 to 18 (MAPARLFALLLLFVGGVA). Topologically, residues 19 to 145 (ESIRETEVID…QGSNIFERTE (127 aa)) are extracellular. O-linked (Xyl...) (glycosaminoglycan) serine glycosylation is found at serine 39, serine 61, and serine 63. Residue serine 95 is glycosylated (O-linked (Xyl...) (chondroitin sulfate) serine). A helical membrane pass occupies residues 146 to 170 (VLAALIVGGIVGILFAVFLILLLMY). The Cytoplasmic segment spans residues 171-198 (RMKKKDEGSYDLGKKPIYKKAPTNEFYA).

This sequence belongs to the syndecan proteoglycan family. Homodimer. Interacts with CDCP1 and SDCBP. Interacts (via its cytoplasmic domain) with GIPC (via its PDZ domain). Interacts (via its cytoplasmic domain) with NUDT16L1. Interacts with DNM2; this interaction is markedly enhanced at focal ahesion site upon induction of focal adhesions and stress-fiber formation. Post-translationally, shedding is enhanced by a number of factors such as heparanase, thrombin or EGF. Also by stress and wound healing. PMA-mediated shedding is inhibited by TIMP3. In terms of processing, O-glycosylated; contains both chondroitin sulfate and heparan sulfate. Ser-39, Ser-61 and Ser-63 can all be modified by either chondroitin sulfate or heparan sulfate, and the protein exists in forms that contain only chondroitin sulfate, only heparan sulfate and both chondroitin sulfate and heparan sulfate.

The protein localises to the membrane. Its subcellular location is the secreted. Cell surface proteoglycan which regulates exosome biogenesis in concert with SDCBP and PDCD6IP. The protein is Syndecan-4 of Pongo abelii (Sumatran orangutan).